A 252-amino-acid polypeptide reads, in one-letter code: Imidazole glycerol phosphate synthase subunit HisF (252 aa).

Residues D11 and D130 contribute to the active site.

This sequence belongs to the HisA/HisF family. Heterodimer of HisH and HisF.

The protein resides in the cytoplasm. The enzyme catalyses 5-[(5-phospho-1-deoxy-D-ribulos-1-ylimino)methylamino]-1-(5-phospho-beta-D-ribosyl)imidazole-4-carboxamide + L-glutamine = D-erythro-1-(imidazol-4-yl)glycerol 3-phosphate + 5-amino-1-(5-phospho-beta-D-ribosyl)imidazole-4-carboxamide + L-glutamate + H(+). It participates in amino-acid biosynthesis; L-histidine biosynthesis; L-histidine from 5-phospho-alpha-D-ribose 1-diphosphate: step 5/9. Functionally, IGPS catalyzes the conversion of PRFAR and glutamine to IGP, AICAR and glutamate. The HisF subunit catalyzes the cyclization activity that produces IGP and AICAR from PRFAR using the ammonia provided by the HisH subunit. This is Imidazole glycerol phosphate synthase subunit HisF from Citrifermentans bemidjiense (strain ATCC BAA-1014 / DSM 16622 / JCM 12645 / Bem) (Geobacter bemidjiensis).